The sequence spans 397 residues: Elongation factor Tu (397 aa).

A tr-type G domain is found at 10–207 (KPHVNIGTIG…AVDESIPDPV (198 aa)). The interval 19–26 (GHVDHGKT) is G1. Residue 19–26 (GHVDHGKT) coordinates GTP. A Mg(2+)-binding site is contributed by T26. The G2 stretch occupies residues 63–67 (GITIN). Positions 84–87 (DAPG) are G3. GTP-binding positions include 84–88 (DAPGH) and 139–142 (NKAD). Residues 139 to 142 (NKAD) are G4. A G5 region spans residues 177–179 (SGL).

Belongs to the TRAFAC class translation factor GTPase superfamily. Classic translation factor GTPase family. EF-Tu/EF-1A subfamily. As to quaternary structure, monomer.

It is found in the cytoplasm. The catalysed reaction is GTP + H2O = GDP + phosphate + H(+). GTP hydrolase that promotes the GTP-dependent binding of aminoacyl-tRNA to the A-site of ribosomes during protein biosynthesis. This Tropheryma whipplei (strain TW08/27) (Whipple's bacillus) protein is Elongation factor Tu.